Here is a 1094-residue protein sequence, read N- to C-terminus: Transcriptional regulator CRZ1 (1094 aa).

Disordered regions lie at residues 1 to 29 (MADP…STSS), 44 to 81 (FNSD…LDMM), 93 to 428 (GRRQ…FPPS), and 477 to 519 (RAGA…RTLS). 2 stretches are compositionally biased toward basic and acidic residues: residues 60-78 (QARK…KRYL) and 94-103 (RRQESLRKES). Residue serine 103 is modified to Phosphoserine. The span at 148–159 (PNQPQQPSQQPP) shows a compositional bias: low complexity. Polar residues-rich tracts occupy residues 166–187 (SEQS…QSSG) and 201–217 (GTTS…QISP). 2 stretches are compositionally biased toward low complexity: residues 228–241 (QPPQ…QQQQ) and 252–262 (EQQQQYAQGEG). Residues 286 to 324 (VISNTSHPSQYPSRTSSPFPQQSQSNMVPASTVNQTRTE) show a composition bias toward polar residues. A phosphoserine mark is found at serine 288 and serine 329. Low complexity predominate over residues 325–342 (SFPASRSPSPFAPQQASQ). 2 stretches are compositionally biased toward polar residues: residues 343-379 (TEAS…FNKP) and 396-412 (IVTQ…LNQP). The span at 477–493 (RAGAARGAQRQGPQGQG) shows a compositional bias: low complexity. The segment covering 507–519 (PSPQSHPLPRTLS) has biased composition (polar residues). Phosphoserine is present on residues serine 508, serine 569, serine 765, and serine 810. A disordered region spans residues 835–888 (ITGDDGSLLPPSNRGHAMSHSRHSSTSSIRSASPALSISSQGSSFSHHSPRMDM). Residues 858 to 881 (SSTSSIRSASPALSISSQGSSFSH) show a composition bias toward low complexity. A C2H2-type 1 zinc finger spans residues 944-968 (FKCPVPGCGSTFTRHFNLKGHLRSH). A C2H2-type 2; degenerate zinc finger spans residues 1007–1029 (FECEGCGKKFARLDALTRHHKSE). The disordered stretch occupies residues 1037 to 1094 (THPLPTNFDGSPMSESQYKTYKGIKSTPEGSGRRLSSTASGSGSGKRRSKKSETSEED).

Phosphorylated. Dephosphorylated by calcineurin (CNA1) which promotes nuclear localization.

It is found in the cytoplasm. The protein localises to the cytosol. Its subcellular location is the nucleus. In terms of biological role, DNA-binding transcriptional activator that interacts with calcineurin-dependent response element (CDRE) promoters. Activates expression of genes required to maintain cell wall integrity during stress. Activates expression of genes required for transepithelial migration through the host blood-brain barrier. Required for adaptation to host temperature during infection. The sequence is that of Transcriptional regulator CRZ1 from Cryptococcus neoformans var. grubii serotype A (strain H99 / ATCC 208821 / CBS 10515 / FGSC 9487) (Filobasidiella neoformans var. grubii).